The following is a 412-amino-acid chain: Serine hydroxymethyltransferase (412 aa).

(6S)-5,6,7,8-tetrahydrofolate-binding positions include Leu-117 and 121–123 (GHL). Lys-226 is subject to N6-(pyridoxal phosphate)lysine. (6S)-5,6,7,8-tetrahydrofolate-binding positions include Glu-242 and 350 to 352 (SPF).

This sequence belongs to the SHMT family. In terms of assembly, homodimer. It depends on pyridoxal 5'-phosphate as a cofactor.

It localises to the cytoplasm. The catalysed reaction is (6R)-5,10-methylene-5,6,7,8-tetrahydrofolate + glycine + H2O = (6S)-5,6,7,8-tetrahydrofolate + L-serine. It participates in one-carbon metabolism; tetrahydrofolate interconversion. The protein operates within amino-acid biosynthesis; glycine biosynthesis; glycine from L-serine: step 1/1. Its function is as follows. Catalyzes the reversible interconversion of serine and glycine with tetrahydrofolate (THF) serving as the one-carbon carrier. Appears to be specific for THF as the pteridine substrate, since the use of tetrahydromethanopterin (H4MPT) is much less efficient. Also exhibits THF-independent aldolase activity toward beta-hydroxyamino acids, producing glycine and aldehydes, via a retro-aldol mechanism. Thus, is able to catalyze the cleavage of L-allo-threonine and L-threo-beta-phenylserine. This chain is Serine hydroxymethyltransferase, found in Methanosarcina barkeri (strain Fusaro / DSM 804).